Reading from the N-terminus, the 611-residue chain is MEESETVLKLRLQLKEAEEERIKAAQYGLELLESQSDLQNQLEEQRNEMTSTIENLEQEKYSLQREVELKNRMLESLTSECENIRQQQKLCLEQLQEQLERNHHRELSEIKDKLEKLKAELDEARLSEKQLKHKLEYQSEVLANKSEELRMMSERVHETMSSEMLTLQLEKTELESAKANLEQEVNELQYREQQLLLTNGTQSRQLERLQDEKEDREKEAVGYFKALEKAREANQDLQAQLDIALQQAQDPNSKGNSLFAEVEDRRAEMERQLISMKVQFQSLQKQHAFSRQQMHRMKVQIATLLQLKGSQSDPEQLERLQAMVAQKNSEFETLVMKVRQLEKSQQICENGPVANSSDGLGQGDETYYVDLLKMKLVNSSKEIEKIKDELSLQRMKALAESQRVLDLERKLFANDRHLKLSQGENMKLRVNLDEMKMKYEPDEIAKIRTQKRRKEQLPLDCAIDNTSATVTSGSQAHGLSDAIPEDMCPAESTVHRNLLKEDSSLSTKEQDLSSVAVKPIEPANGQPPKERKRVRIVENENDNQDINKRNTNNCSVTSTSPRSASEESTSESKRFDEEQEKRKQERKSRLRAPPVLHVPSKPAATTQCPQQ.

Residues 1–288 (MEESETVLKL…QFQSLQKQHA (288 aa)) are a coiled coil. Over residues 499–511 (LKEDSSLSTKEQD) the composition is skewed to basic and acidic residues. The disordered stretch occupies residues 499-611 (LKEDSSLSTK…PAATTQCPQQ (113 aa)). Residues 549–567 (RNTNNCSVTSTSPRSASEE) show a composition bias toward polar residues. The span at 570–583 (SESKRFDEEQEKRK) shows a compositional bias: basic and acidic residues.

Belongs to the Spindly family.

It is found in the chromosome. The protein localises to the centromere. It localises to the kinetochore. Required for the localization of dynein and dynactin to the mitotic kintochore. Dynein is believed to control the initial lateral interaction between the kinetochore and spindle microtubules and to facilitate the subsequent formation of end-on kinetochore-microtubule attachments mediated by the NDC80 complex. May act as an adapter protein linking the dynein motor complex to various cargos. This chain is Protein Spindly (spdl1), found in Xenopus tropicalis (Western clawed frog).